The sequence spans 61 residues: Tryptophyllin-1 (61 aa).

The N-terminal stretch at 1 to 22 (MDILKKSLFLALFLGLVSISFC) is a signal peptide. A propeptide spanning residues 23-53 (DEEKRQDDDESNESEEKKEIHEEGSQEERRE) is cleaved from the precursor. The tract at residues 24–61 (EEKRQDDDESNESEEKKEIHEEGSQEERREKPPPWVPV) is disordered. The segment covering 36–55 (SEEKKEIHEEGSQEERREKP) has biased composition (basic and acidic residues).

In terms of tissue distribution, expressed by the skin glands.

The protein localises to the secreted. Functionally, the synthetic peptide inhibits bradykinin-induced relaxation of rat tail artery smooth muscle, and also has anti-proliferative effects on the human prostate cancer cell lines LNCaP, PC3 and DU145. The chain is Tryptophyllin-1 from Phyllomedusa sauvagei (Sauvage's leaf frog).